Consider the following 170-residue polypeptide: tRNA-splicing endonuclease (170 aa).

Active-site residues include Tyr110, His116, and Lys147.

The protein belongs to the tRNA-intron endonuclease family. Archaeal short subfamily. As to quaternary structure, homotetramer; although the tetramer contains four active sites, only two participate in the cleavage. Therefore, it should be considered as a dimer of dimers.

The enzyme catalyses pretRNA = a 3'-half-tRNA molecule with a 5'-OH end + a 5'-half-tRNA molecule with a 2',3'-cyclic phosphate end + an intron with a 2',3'-cyclic phosphate and a 5'-hydroxyl terminus.. Its function is as follows. Endonuclease that removes tRNA introns. Cleaves pre-tRNA at the 5'- and 3'-splice sites to release the intron. The products are an intron and two tRNA half-molecules bearing 2',3' cyclic phosphate and 5'-OH termini. Recognizes a pseudosymmetric substrate in which 2 bulged loops of 3 bases are separated by a stem of 4 bp. This Pyrococcus furiosus (strain ATCC 43587 / DSM 3638 / JCM 8422 / Vc1) protein is tRNA-splicing endonuclease.